The sequence spans 194 residues: Imidazoleglycerol-phosphate dehydratase (194 aa).

Belongs to the imidazoleglycerol-phosphate dehydratase family.

Its subcellular location is the cytoplasm. The catalysed reaction is D-erythro-1-(imidazol-4-yl)glycerol 3-phosphate = 3-(imidazol-4-yl)-2-oxopropyl phosphate + H2O. It participates in amino-acid biosynthesis; L-histidine biosynthesis; L-histidine from 5-phospho-alpha-D-ribose 1-diphosphate: step 6/9. This Bacillus subtilis (strain 168) protein is Imidazoleglycerol-phosphate dehydratase.